Consider the following 256-residue polypeptide: Homeobox-leucine zipper protein HOX18 (256 aa).

The tract at residues 52-117 is disordered; sequence YDHGRDEEQA…GGGGGTRKKL (66 aa). The span at 102-112 shows a compositional bias: gly residues; that stretch reads DGGSGSGGGGG. A DNA-binding region (homeobox) is located at residues 112-171; the sequence is GTRKKLQLTKEQSTLLEDSFRVHNILSHAQKHELARQLKLKPRQVEVWFQNRRARTKLKQ. The interval 170–214 is leucine-zipper; the sequence is KQTEVDCEFLKRCCESLTEENKQLKHELMELRRLASAAAAAAGSQ.

Belongs to the HD-ZIP homeobox family. Class II subfamily. In terms of tissue distribution, expressed in roots, leaf sheaths and blades and panicles.

The protein resides in the nucleus. Functionally, probable transcription factor. The chain is Homeobox-leucine zipper protein HOX18 (HOX18) from Oryza sativa subsp. indica (Rice).